We begin with the raw amino-acid sequence, 521 residues long: Sphingolipid C9-methyltransferase 2 (521 aa).

2 helical membrane-spanning segments follow: residues 60–80 (VLISILTIVPWWLSWKVGGGF) and 85–105 (FFAIIVDLPMLAAWWLTISAI). Residues 225–226 (YT), 262–270 (MLDIGCGWG), 288–293 (TLGRNQ), and 318–319 (YR) contribute to the S-adenosyl-L-methionine site.

It belongs to the CFA/CMAS family.

It is found in the membrane. The enzyme catalyses a (4E,8E)-4-sphinga-4,8-dienine ceramide + S-adenosyl-L-methionine = a 9-methyl-(4E,8E)-sphinga-4,8-dienine ceramide + S-adenosyl-L-homocysteine + H(+). It participates in lipid metabolism; sphingolipid metabolism. Its function is as follows. Catalyzes methylation of the sphingoid base component of glucosylceramides (GluCers) at the C9-position. Sphingolipid C9-methylation requires 4,8-desaturated ceramides as substrates. Glucosylceramides play important roles in growth, differentiation and pathogenicity. The methyl group at the C9-position distinguishes fungal glucosylceramides from those of plants and animals and may thus play a role in host-pathogen interactions enabling the host to recognize the fungal attack and initiate specific defense responses. However, C-9 methylation of GlcCers is not essential for the sensitivity of F.graminearum to plant defensins MsDef1 and RsAFP2. This is Sphingolipid C9-methyltransferase 2 from Gibberella zeae (strain ATCC MYA-4620 / CBS 123657 / FGSC 9075 / NRRL 31084 / PH-1) (Wheat head blight fungus).